Here is a 1507-residue protein sequence, read N- to C-terminus: ABC multidrug transporter SNQ2 (1507 aa).

The disordered stretch occupies residues Met1–Glu73. The span at Arg41 to Asn55 shows a compositional bias: basic and acidic residues. N-linked (GlcNAc...) asparagine glycosylation is found at Asn55 and Asn336. The 256-residue stretch at Cys157–Pro412 folds into the ABC transporter 1 domain. The next 3 membrane-spanning stretches (helical) occupy residues Ala522–Tyr542, Gly556–Phe576, and Phe605–Leu625. N-linked (GlcNAc...) asparagine glycosylation occurs at Asn626. A helical transmembrane segment spans residues Val635 to Ala655. Asn659 carries an N-linked (GlcNAc...) asparagine glycan. 2 consecutive transmembrane segments (helical) span residues Ser665–Pro685 and Phe773–Ile793. In terms of domain architecture, ABC transporter 2 spans Phe857 to Ala1099. N-linked (GlcNAc...) asparagine glycosylation is present at Asn878. Gly893–Thr900 contributes to the ATP binding site. 3 helical membrane-spanning segments follow: residues Tyr1193–Tyr1213, Thr1220–Met1240, and Leu1270–Val1290. Asn1311 carries N-linked (GlcNAc...) asparagine glycosylation. Helical transmembrane passes span Ile1314–Leu1334 and Val1339–Ser1359. Asn1428 is a glycosylation site (N-linked (GlcNAc...) asparagine). A helical membrane pass occupies residues Phe1459–Ile1479.

Belongs to the ABC transporter superfamily. ABCG family. PDR (TC 3.A.1.205) subfamily.

It is found in the cell membrane. In terms of biological role, ABC multidrug transporter involved in the response to azoles such as fluconazole, itraconazole, ketoconazole and voriconazole and contributes to the development of PDR1-dependent azole resistance. Plays a role in biofilm tolerance to fluconazole. Also confers resistance to 4-nitroquinoline-N-oxide (4-NQO). The chain is ABC multidrug transporter SNQ2 from Candida glabrata (strain ATCC 2001 / BCRC 20586 / JCM 3761 / NBRC 0622 / NRRL Y-65 / CBS 138) (Yeast).